A 348-amino-acid chain; its full sequence is MTQPLPGARAVSAENELDIRGLFRTLWAGKFWIIGIGLLFALIALAYTFFARQEWSATAITDRPTVNMLGGYYSQQQFLRNLDIKTDPASSDKPSVMDEAYKEFIMQLASWDTRRDFWLQTDYYKQRMVGNSKADAAMLDELINNIQFTPGDFTRAINDNVKLIAETAPDANNLLRQYVAFASQRAASHLNDELKGAWAARTVQMKAQVKRQEEVAKAIYSRRVNSIEQALKIAEQHNISRSATDVPADELPDSELFLLGRPMLQARLENLQAVGPAFDLDYFQNRAMLNTLNVGPTLDPRFQTYRYLRTPEEPVKRDSPRRAFLMIMWGIVGALIGAGVALTRRRTI.

2 helical membrane passes run 31-51 and 323-343; these read FWIIGIGLLFALIALAYTFFA and AFLMIMWGIVGALIGAGVALT.

It belongs to the WzzB/Cld/Rol family. In terms of assembly, probably part of a complex composed of WzxE, WzyE and WzzE.

The protein localises to the cell inner membrane. It participates in bacterial outer membrane biogenesis; enterobacterial common antigen biosynthesis. Its function is as follows. Modulates the polysaccharide chain length of enterobacterial common antigen (ECA). This chain is ECA polysaccharide chain length modulation protein, found in Salmonella typhimurium (strain LT2 / SGSC1412 / ATCC 700720).